A 143-amino-acid polypeptide reads, in one-letter code: Cofilin (143 aa).

Ser-4 carries the phosphoserine modification. The ADF-H domain occupies 5 to 137 (GVAVADESLT…SYDSVLERVS (133 aa)).

The protein belongs to the actin-binding proteins ADF family. In terms of assembly, interacts with actin and AIP1 in a ternary complex. In terms of processing, the N-terminus is blocked.

The protein localises to the cytoplasm. The protein resides in the cytoskeleton. It is found in the nucleus matrix. Functionally, controls reversibly actin polymerization and depolymerization in a pH-sensitive manner. It has the ability to bind G- and F-actin in a 1:1 ratio of cofilin to actin. Binding to F-actin is regulated by tropomyosin. It is the major component of intranuclear and cytoplasmic actin rods. Required for accumulation of actin at the cell division site via depolymerizing actin at the cell ends. In association with myosin II has a role in the assembly of the contractile ring via severing actin filaments. Involved in the maintenance of the contractile ring once formed. In association with profilin and capping protein, has a role in the mitotic reorganization of the actin cytoskeleton. In effect, yeast cofilin increases the rate of actin polymerization by making new ends available for actin subunit addition. Such a protein complex is important for the polarized growth of yeast cells. This Saccharomyces cerevisiae (strain ATCC 204508 / S288c) (Baker's yeast) protein is Cofilin (COF1).